The following is a 358-amino-acid chain: Tribbles homolog 3 (358 aa).

The tract at residues 1-54 (MRATPLAAPAGSLSRKKRLELDDNLDTERPVQKRARSGPQPRLPPCLLPLSPPT) is disordered. The segment at 1–127 (MRATPLAAPA…KHVARPTEVL (127 aa)) is interaction with DDIT3/CHOP. Ser-12 carries the phosphoserine modification. Positions 41 to 54 (PRLPPCLLPLSPPT) are enriched in pro residues. The region spanning 68–316 (LGPYVLLEPE…TGILLHPWLR (249 aa)) is the Protein kinase domain.

The protein belongs to the protein kinase superfamily. CAMK Ser/Thr protein kinase family. Tribbles subfamily. As to quaternary structure, interacts with AKT1, AKT2, MAP2K1 and MAP2K7. Interacts with ATF4. Interacts with DDIT3/CHOP and inhibits its interaction with EP300/P300. Interacts with APOBEC3C. Interacts (via N-terminus) with APOBEC3A. Interacts with RELA. As to expression, highest expression in liver, pancreas, peripheral blood leukocytes and bone marrow. Also highly expressed in a number of primary lung, colon and breast tumors. Expressed in spleen, thymus, and prostate and is undetectable in other examined tissues, including testis, ovary, small intestine, colon, leukocyte, heart, brain, placenta, lung, skeletal muscle, and kidney.

The protein resides in the nucleus. Its function is as follows. Inactive protein kinase which acts as a regulator of the integrated stress response (ISR), a process for adaptation to various stress. Inhibits the transcriptional activity of DDIT3/CHOP and is involved in DDIT3/CHOP-dependent cell death during ER stress. May play a role in programmed neuronal cell death but does not appear to affect non-neuronal cells. Acts as a negative feedback regulator of the ATF4-dependent transcription during the ISR: while TRIB3 expression is promoted by ATF4, TRIB3 protein interacts with ATF4 and inhibits ATF4 transcription activity. Disrupts insulin signaling by binding directly to Akt kinases and blocking their activation. May bind directly to and mask the 'Thr-308' phosphorylation site in AKT1. Interacts with the NF-kappa-B transactivator p65 RELA and inhibits its phosphorylation and thus its transcriptional activation activity. Interacts with MAPK kinases and regulates activation of MAP kinases. Can inhibit APOBEC3A editing of nuclear DNA. This is Tribbles homolog 3 (TRIB3) from Homo sapiens (Human).